A 234-amino-acid polypeptide reads, in one-letter code: HTH-type transcriptional regulator ArcR (234 aa).

40 to 129 (VRHYTKGQVI…MAFLCKANDD (90 aa)) contributes to the a nucleoside 3',5'-cyclic phosphate binding site. The HTH crp-type domain occupies 155–228 (KFAKDRIIKL…HKNWLVSKHL (74 aa)). Positions 188-207 (IQLMSDMAGISRETAGHIIH) form a DNA-binding region, H-T-H motif.

The protein resides in the cytoplasm. Its function is as follows. Positively regulates the expression of the arcABDCR operon under anaerobic conditions, thus playing an essential role in arginine catabolism. May also control the expression of genes encoding proteins which are involved in anaerobic metabolism. Can bind cyclic AMP. The sequence is that of HTH-type transcriptional regulator ArcR (arcR) from Staphylococcus aureus (strain MSSA476).